Consider the following 431-residue polypeptide: Gamma conglutin 1 (431 aa).

Residues 1–24 form the signal peptide; sequence MASFLHNFLLFFCSLSLIILTSSA. The Peptidase A1 domain occupies 51-407; sequence HVVQIHKRTP…DLMNSRLGFS (357 aa). Cystine bridges form between C79/C168, C93/C106, C98/C123, C109/C118, and C322/C369.

Belongs to the peptidase A1 family. Two-subunit monomeric unit made of alpha and beta subunits coupled by disulfide bonds (at pH 4.5 and under non-reducing conditions). Monomeric alpha and beta subunits in reducing conditions. Can also form oligomers including dimer, tetramer and cyclic hexamer (trimer of dimers) (at pH &gt; 5.5). Component of globulins complexes which accumulate in seeds. Interacts with flavonoids (e.g. apigenin glucosides) present in globulins complexes.

The protein localises to the secreted. The protein resides in the extracellular space. In terms of biological role, sulfur-rich seed storage protein that remains undegraded at germination. The protein is Gamma conglutin 1 of Prunus dulcis (Almond).